The following is a 570-amino-acid chain: Periplasmic trehalase (570 aa).

Positions Met-1 to Ala-34 are cleaved as a signal peptide. Residues Arg-159, Trp-166–Asp-167, Asn-203, Arg-212–Gln-214, Arg-284–Glu-286, and Gly-317 each bind substrate. Catalysis depends on proton donor/acceptor residues Asp-319 and Glu-503. Glu-518 provides a ligand contact to substrate. The segment at Lys-544–Gln-570 is disordered. The span at Pro-554–Gln-570 shows a compositional bias: low complexity.

It belongs to the glycosyl hydrolase 37 family. In terms of assembly, monomer.

Its subcellular location is the periplasm. It catalyses the reaction alpha,alpha-trehalose + H2O = alpha-D-glucose + beta-D-glucose. Functionally, provides the cells with the ability to utilize trehalose at high osmolarity by splitting it into glucose molecules that can subsequently be taken up by the phosphotransferase-mediated uptake system. This is Periplasmic trehalase from Salmonella typhimurium (strain LT2 / SGSC1412 / ATCC 700720).